The following is a 118-amino-acid chain: MTDNIMKDHRHIFLPQPVKADEKPGAFSERFGWKLLLDTPRKKNVYEGTKFMSQDFWPTPLVKTTAPKVKLIPADAPPQSAKFWKAPLLKDTPRQSNVIPGDFLPFSNTFGLATIQRR.

Functionally, seems to be required for the LH-II stabilization. This Rhodobacter capsulatus (Rhodopseudomonas capsulata) protein is Light-harvesting protein B-800/850 gamma chain (pucE).